Reading from the N-terminus, the 57-residue chain is Large ribosomal subunit protein bL32c (57 aa).

In terms of assembly, component of the chloroplast large ribosomal subunit (LSU). Mature 70S chloroplast ribosomes of higher plants consist of a small (30S) and a large (50S) subunit. The 30S small subunit contains 1 molecule of ribosomal RNA (16S rRNA) and 24 different proteins. The 50S large subunit contains 3 rRNA molecules (23S, 5S and 4.5S rRNA) and 33 different proteins.

It is found in the plastid. The protein resides in the chloroplast. Its function is as follows. Component of the chloroplast ribosome (chloro-ribosome), a dedicated translation machinery responsible for the synthesis of chloroplast genome-encoded proteins, including proteins of the transcription and translation machinery and components of the photosynthetic apparatus. In Spinacia oleracea (Spinach), this protein is Large ribosomal subunit protein bL32c (rpl32).